We begin with the raw amino-acid sequence, 517 residues long: GMP synthase [glutamine-hydrolyzing] (517 aa).

Residues 4–193 (KIIILDFGSQ…VVDICGGKQD (190 aa)) enclose the Glutamine amidotransferase type-1 domain. The active-site Nucleophile is the Cys79. Residues His167 and Glu169 contribute to the active site. In terms of domain architecture, GMPS ATP-PPase spans 194–382 (WSAASFIETT…LGMPEHLITR (189 aa)). 221–227 (SGGVDSS) contacts ATP.

Homodimer.

The catalysed reaction is XMP + L-glutamine + ATP + H2O = GMP + L-glutamate + AMP + diphosphate + 2 H(+). Its pathway is purine metabolism; GMP biosynthesis; GMP from XMP (L-Gln route): step 1/1. Functionally, catalyzes the synthesis of GMP from XMP. The polypeptide is GMP synthase [glutamine-hydrolyzing] (Phocaeicola vulgatus (strain ATCC 8482 / DSM 1447 / JCM 5826 / CCUG 4940 / NBRC 14291 / NCTC 11154) (Bacteroides vulgatus)).